The following is a 95-amino-acid chain: Large ribosomal subunit protein bL27 (95 aa).

The propeptide occupies 1-10 (MRFILNLQFF).

This sequence belongs to the bacterial ribosomal protein bL27 family. The N-terminus is cleaved by ribosomal processing cysteine protease Prp.

The chain is Large ribosomal subunit protein bL27 from Mesoplasma florum (strain ATCC 33453 / NBRC 100688 / NCTC 11704 / L1) (Acholeplasma florum).